The following is a 100-amino-acid chain: MDIIKAYIILSIALFLIGLLGVIVRKNLITVLVSTELMLNGINLALVAADKVLGRVDGQIFAFFVLTVAAAEVAVGLGLIVAIFRLKGYEASHEISQLRD.

The next 3 helical transmembrane spans lie at 3–23 (IIKA…LGVI), 28–48 (LITV…ALVA), and 60–80 (IFAF…LGLI).

This sequence belongs to the complex I subunit 4L family. NDH-1 is composed of 14 different subunits. Subunits NuoA, H, J, K, L, M, N constitute the membrane sector of the complex.

It is found in the cell inner membrane. It carries out the reaction a quinone + NADH + 5 H(+)(in) = a quinol + NAD(+) + 4 H(+)(out). Functionally, NDH-1 shuttles electrons from NADH, via FMN and iron-sulfur (Fe-S) centers, to quinones in the respiratory chain. The immediate electron acceptor for the enzyme in this species is believed to be ubiquinone. Couples the redox reaction to proton translocation (for every two electrons transferred, four hydrogen ions are translocated across the cytoplasmic membrane), and thus conserves the redox energy in a proton gradient. In Aquifex aeolicus (strain VF5), this protein is NADH-quinone oxidoreductase subunit K 1.